The chain runs to 107 residues: Protein Rev (107 aa).

Ser-5 is modified (phosphoserine; by host CK2). The segment at 18–26 (AIKILYQSN) is homomultimerization. 2 disordered regions span residues 24-48 (QSNP…WRAR) and 82-107 (HLDC…VGRS). The short motif at 34-50 (TRQARRNRRRRWRARQR) is the Nuclear localization signal and RNA-binding (RRE) element. The segment covering 36–48 (QARRNRRRRWRAR) has biased composition (basic residues). Positions 73-84 (LQLPPLERLHLD) match the Nuclear export signal and binding to XPO1 motif. Over residues 88–101 (DSGTSGTQQPQGTE) the composition is skewed to polar residues. Ser-92 carries the post-translational modification Phosphoserine; by host.

This sequence belongs to the HIV-1 REV protein family. Homomultimer; when bound to the RRE. Multimeric assembly is essential for activity and may involve XPO1. Binds to human KPNB1, XPO1, TNPO1, RANBP5 and IPO7. Interacts with the viral Integrase. Interacts with human KHDRBS1. Interacts with human NAP1; this interaction decreases Rev multimerization and stimulates its activity. Interacts with human DEAD-box helicases DDX3 and DDX24; these interactions may serve for viral RNA export to the cytoplasm and packaging, respectively. Interacts with human PSIP1; this interaction may inhibit HIV-1 DNA integration by promoting dissociation of the Integrase-LEDGF/p75 complex. In terms of processing, asymmetrically arginine dimethylated at one site by host PRMT6. Methylation impairs the RNA-binding activity and export of viral RNA from the nucleus to the cytoplasm. Phosphorylated by protein kinase CK2. Presence of, and maybe binding to the N-terminus of the regulatory beta subunit of CK2 is necessary for CK2-mediated Rev's phosphorylation.

It is found in the host nucleus. The protein resides in the host nucleolus. It localises to the host cytoplasm. Escorts unspliced or incompletely spliced viral pre-mRNAs (late transcripts) out of the nucleus of infected cells. These pre-mRNAs carry a recognition sequence called Rev responsive element (RRE) located in the env gene, that is not present in fully spliced viral mRNAs (early transcripts). This function is essential since most viral proteins are translated from unspliced or partially spliced pre-mRNAs which cannot exit the nucleus by the pathway used by fully processed cellular mRNAs. Rev itself is translated from a fully spliced mRNA that readily exits the nucleus. Rev's nuclear localization signal (NLS) binds directly to KPNB1/Importin beta-1 without previous binding to KPNA1/Importin alpha-1. KPNB1 binds to the GDP bound form of RAN (Ran-GDP) and targets Rev to the nucleus. In the nucleus, the conversion from Ran-GDP to Ran-GTP dissociates Rev from KPNB1 and allows Rev's binding to the RRE in viral pre-mRNAs. Rev multimerization on the RRE via cooperative assembly exposes its nuclear export signal (NES) to the surface. Rev can then form a complex with XPO1/CRM1 and Ran-GTP, leading to nuclear export of the complex. Conversion from Ran-GTP to Ran-GDP mediates dissociation of the Rev/RRE/XPO1/RAN complex, so that Rev can return to the nucleus for a subsequent round of export. Beside KPNB1, also seems to interact with TNPO1/Transportin-1, RANBP5/IPO5 and IPO7/RANBP7 for nuclear import. The nucleoporin-like HRB/RIP is an essential cofactor that probably indirectly interacts with Rev to release HIV RNAs from the perinuclear region to the cytoplasm. The protein is Protein Rev of Human immunodeficiency virus type 1 group M subtype G (isolate SE6165) (HIV-1).